The chain runs to 117 residues: Translation initiation factor 1A (117 aa).

The 76-residue stretch at Ile-17–Thr-92 folds into the S1-like domain.

This sequence belongs to the eIF-1A family.

Its function is as follows. Seems to be required for maximal rate of protein biosynthesis. Enhances ribosome dissociation into subunits and stabilizes the binding of the initiator Met-tRNA(I) to 40 S ribosomal subunits. This Thermococcus kodakarensis (strain ATCC BAA-918 / JCM 12380 / KOD1) (Pyrococcus kodakaraensis (strain KOD1)) protein is Translation initiation factor 1A.